We begin with the raw amino-acid sequence, 464 residues long: Citrate synthase, mitochondrial (464 aa).

The transit peptide at 1-27 directs the protein to the mitochondrion; that stretch reads MALLTAATRLLGAKNSSCLVLAARHAS. Residues 2 to 21 carry the SIFI-degron motif; that stretch reads ALLTAATRLLGAKNSSCLVL. K57 is subject to N6-succinyllysine. K76 is modified (N6-acetyllysine; alternate). K76 carries the N6-succinyllysine; alternate modification. N6-succinyllysine occurs at positions 103 and 193. S226 carries the post-translational modification Phosphoserine. H301 is an active-site residue. Residues K321 and K327 each carry the N6-acetyllysine; alternate modification. Residues K321 and K327 each carry the N6-succinyllysine; alternate modification. The active site involves H347. Oxaloacetate is bound at residue R356. The residue at position 375 (K375) is an N6-acetyllysine; alternate. K375 is subject to N6-succinyllysine; alternate. K382 carries the post-translational modification N6-acetyllysine. At K393 the chain carries N6-acetyllysine; alternate. At K393 the chain carries N6-succinyllysine; alternate. K395 bears the N6,N6,N6-trimethyllysine mark. Residue D402 is part of the active site. Oxaloacetate-binding residues include R428 and R448. K450 is subject to N6-succinyllysine. At K459 the chain carries N6-acetyllysine; alternate. Residue K459 is modified to N6-succinyllysine; alternate.

The protein belongs to the citrate synthase family. As to quaternary structure, homodimer. Post-translationally, methylated. Trimethylation at Lys-395 by CSKMT decreases citrate synthase activity. In terms of processing, in response to mitochondrial stress, the precursor protein is ubiquitinated by the SIFI complex in the cytoplasm before mitochondrial import, leading to its degradation. Within the SIFI complex, UBR4 initiates ubiquitin chain that are further elongated or branched by KCMF1.

It is found in the mitochondrion matrix. The catalysed reaction is oxaloacetate + acetyl-CoA + H2O = citrate + CoA + H(+). Its pathway is carbohydrate metabolism; tricarboxylic acid cycle; isocitrate from oxaloacetate: step 1/2. In terms of biological role, key enzyme of the Krebs tricarboxylic acid cycle which catalyzes the synthesis of citrate from acetyl coenzyme A and oxaloacetate. The chain is Citrate synthase, mitochondrial (Cs) from Mus musculus (Mouse).